The chain runs to 1059 residues: Ceruloplasmin (1059 aa).

A signal peptide spans 1 to 19 (MKFLLLSALLFLHSSLAWT). Plastocyanin-like domains are found at residues 20–199 (REKH…LILC), 208–356 (KEEN…VRDC), 369–554 (HVRH…MKIC), 564–712 (RQKD…VNQC), 724–894 (GERT…LIVC), and 902–1055 (FNPK…PNQE). Residues Tyr55, Gly64, and Tyr67 each contribute to the Na(+) site. Residues His120 and His122 each contribute to the Cu(2+) site. His120 is an O2 binding site. Lys128 serves as a coordination point for Ca(2+). Asn138 is a glycosylation site (N-linked (GlcNAc...) asparagine). Ca(2+) is bound by residues Gln143, Asp146, and Asp147. Cysteines 173 and 199 form a disulfide. Cu(2+) contacts are provided by His179 and His181. His179 contacts O2. Asn226 carries N-linked (GlcNAc...) asparagine glycosylation. A Na(+)-binding site is contributed by Ser255. Cys275 and Cys356 form a disulfide bridge. The Cu(2+) site is built by His294, Cys337, and His342. Asn396 carries N-linked (GlcNAc...) asparagine glycosylation. Na(+)-binding residues include Phe407, Gly416, and Tyr419. Cys528 and Cys554 are disulfide-bonded. Residue Asn582 is glycosylated (N-linked (GlcNAc...) asparagine). Na(+) is bound at residue Ser611. Cys631 and Cys712 are oxidised to a cystine. Residues His650, Cys693, His698, and Met703 each coordinate Cu(2+). The active-site Nucleophile; for glutathione peroxidase activity is the Cys693. Asn756 is a glycosylation site (N-linked (GlcNAc...) asparagine). The Na(+) site is built by Phe761, Gly770, and Tyr773. A disulfide bridge connects residues Cys868 and Cys894. An N-linked (GlcNAc...) asparagine glycan is attached at Asn920. Ser949 serves as a coordination point for Na(+). His988, His991, His993, His1033, Cys1034, His1035, His1039, and Met1044 together coordinate Cu(2+). O2 contacts are provided by His991 and His993. His1035 provides a ligand contact to O2.

It belongs to the multicopper oxidase family. In terms of assembly, found in a complex with MPO and LTF; interacts directly with MPO and LTF, which allows Fe(3+) incorporation into LTF, activation of CP ferroxidase activity and protection of CP antioxidant properties by MPO. Cu(2+) is required as a cofactor. Synthesized in liver and secreted into the plasma. Also choroid plexus, yolk sac, placenta, and testis; not in stomach and small intestine. Fetal lung and liver.

The protein localises to the secreted. It carries out the reaction 4 Fe(2+) + O2 + 4 H(+) = 4 Fe(3+) + 2 H2O. The enzyme catalyses 4 Cu(+) + O2 + 4 H(+) = 4 Cu(2+) + 2 H2O. It catalyses the reaction a hydroperoxide + 2 glutathione = an alcohol + glutathione disulfide + H2O. The catalysed reaction is 4 nitric oxide + O2 + 2 H2O = 4 nitrite + 4 H(+). It carries out the reaction 2 glutathione + H2O2 = glutathione disulfide + 2 H2O. Its function is as follows. Multifunctional blue, copper-binding (6-7 atoms per molecule) glycoprotein. It has ferroxidase activity oxidizing Fe(2+) to Fe(3+) without releasing radical oxygen species. It is involved in iron transport across the cell membrane. Copper ions provide a large number of enzymatic activites. Oxidizes highly toxic ferrous ions to the ferric state for further incorporation onto apo-transferrins, catalyzes Cu(+) oxidation and promotes the oxidation of biogenic amines such as norepinephrin and serotonin. Provides Cu(2+) ions for the ascorbate-mediated deaminase degradation of the heparan sulfate chains of GPC1. Has glutathione peroxidase-like activity, can remove both hydrogen peroxide and lipid hydroperoxide in the presence of thiols. Also shows NO-oxidase and NO2 synthase activities that determine endocrine NO homeostasis. This chain is Ceruloplasmin (Cp), found in Rattus norvegicus (Rat).